The primary structure comprises 108 residues: Small ribosomal subunit protein eS25y (108 aa).

The segment at 1-36 is disordered; that stretch reads MAPKKDKVPPPSSKPAKSGGGKQKKKKWSKGKQKEK. Residues 22–31 are compositionally biased toward basic residues; it reads KQKKKKWSKG.

This sequence belongs to the eukaryotic ribosomal protein eS25 family.

In Arabidopsis thaliana (Mouse-ear cress), this protein is Small ribosomal subunit protein eS25y (RPS25B).